A 530-amino-acid chain; its full sequence is Arginine-containing cyclodipeptide synthase pthA (530 aa).

A Conserved DDXXE motif motif is present at residues 419 to 423 (DDRAE).

It belongs to the arginine-containing cyclodipeptide synthase family.

It catalyses the reaction L-aspartyl-tRNA(Asp) + L-arginyl-tRNA(Arg) = cyclo(L-arginyl-L-aspartyl) + tRNA(Asp) + tRNA(Arg) + 2 H(+). It participates in secondary metabolite biosynthesis. Functionally, arginine-containing cyclodipeptide synthase; part of the cluster that mediates the biosynthesis of a highly modified cyclo-arginine-aspartate dipeptide (cRD). Within the pathway, pthA acts as the scaffold-generating enzyme and is responsible for formation of the cyclo-Arg-Asp diketopiperazine (cRW) from L-arginyl-tRNA(Arg) + L-aspartyl-tRNA(Asp). Additional enzymes from the cluster then further modify the cyclo-Arg-Asp diketopiperazine (cRW) scaffold. The protein is Arginine-containing cyclodipeptide synthase pthA of Penicillium thymicola.